Reading from the N-terminus, the 736-residue chain is Catalase-peroxidase (736 aa).

The segment at residues 96–224 (WHSAGTYRTG…LAAVQMGLIY (129 aa)) is a cross-link (tryptophyl-tyrosyl-methioninium (Trp-Tyr) (with M-250)). Histidine 97 (proton acceptor) is an active-site residue. A cross-link (tryptophyl-tyrosyl-methioninium (Tyr-Met) (with W-96)) is located at residues 224–250 (YVNPEGPDGNPDPVASGRDVRETFGRM). Histidine 265 contacts heme b.

Belongs to the peroxidase family. Peroxidase/catalase subfamily. In terms of assembly, homodimer or homotetramer. Heme b is required as a cofactor. Post-translationally, formation of the three residue Trp-Tyr-Met cross-link is important for the catalase, but not the peroxidase activity of the enzyme.

It carries out the reaction H2O2 + AH2 = A + 2 H2O. It catalyses the reaction 2 H2O2 = O2 + 2 H2O. Its function is as follows. Bifunctional enzyme with both catalase and broad-spectrum peroxidase activity. The chain is Catalase-peroxidase from Pelobacter propionicus (strain DSM 2379 / NBRC 103807 / OttBd1).